The chain runs to 289 residues: Ribonuclease HII (289 aa).

The interval 1–55 is disordered; it reads MIRDQAKTPGRAKSAAAAKASPAAKGGGNEAAQSAAGKAAAKPAAKPATSKSGKG. Composition is skewed to low complexity over residues 7–24 and 31–55; these read KTPG…SPAA and AAQS…SGKG. An RNase H type-2 domain is found at 76–264; it reads WPVAGCDEAG…VVAARRKHQP (189 aa). The a divalent metal cation site is built by aspartate 82, glutamate 83, and aspartate 173.

It belongs to the RNase HII family. Requires Mn(2+) as cofactor. The cofactor is Mg(2+).

It is found in the cytoplasm. The catalysed reaction is Endonucleolytic cleavage to 5'-phosphomonoester.. In terms of biological role, endonuclease that specifically degrades the RNA of RNA-DNA hybrids. This chain is Ribonuclease HII, found in Bradyrhizobium sp. (strain BTAi1 / ATCC BAA-1182).